A 359-amino-acid chain; its full sequence is Lactosylceramide 4-alpha-galactosyltransferase (359 aa).

Topologically, residues 1–30 (MGISCSHLEETMSKPPDCLLRMLRGTPRQR) are cytoplasmic. A helical; Signal-anchor for type II membrane protein transmembrane segment spans residues 31-51 (VFTFFIISFKFMFLISILIYW). Residues 52-359 (HTVGAPKDQR…TTHRAMKMYL (308 aa)) are Lumenal-facing. Positions 198–200 (DTD) match the DXD motif motif. 2 N-linked (GlcNAc...) asparagine glycosylation sites follow: Asn-209 and Asn-315.

Belongs to the glycosyltransferase 32 family.

The protein resides in the golgi apparatus membrane. It carries out the reaction a beta-D-Gal-(1-&gt;4)-beta-D-Glc-(1&lt;-&gt;1)-Cer(d18:1(4E)) + UDP-alpha-D-galactose = a globoside Gb3Cer (d18:1(4E)) + UDP + H(+). It catalyses the reaction a beta-D-Gal-(1&lt;-&gt;1')-ceramide + UDP-alpha-D-galactose = alpha-D-Gal-(1-&gt;4)-beta-D-Gal-(1&lt;-&gt;1')-Cer + UDP + H(+). The protein operates within glycolipid biosynthesis. Functionally, catalyzes the transfer of galactose from UDP-alpha-D-galactose to lactosylceramide/beta-D-galactosyl-(1-&gt;4)-beta-D-glucosyl-(1&lt;-&gt;1)-ceramide(d18:1(4E)) to produce globotriaosylceramide/globoside Gb3Cer (d18:1(4E)). Also able to transfer galactose to galactosylceramide/beta-D-Gal-(1&lt;-&gt;1')-Cer. Globoside Gb3Cer is a glycosphingolipid of the globo serie, one of the major types of neutral root structures of glycosphingolipids, that constitute a significant portion of mammalian cell membranes. In Mus musculus (Mouse), this protein is Lactosylceramide 4-alpha-galactosyltransferase.